Consider the following 252-residue polypeptide: Phosphate import ATP-binding protein PstB 1 (252 aa).

In terms of domain architecture, ABC transporter spans 6–247 (LQIRDLSVYY…PKRKETEDYI (242 aa)). 38 to 45 (GPSGSGKS) contacts ATP.

It belongs to the ABC transporter superfamily. Phosphate importer (TC 3.A.1.7) family. The complex is composed of two ATP-binding proteins (PstB), two transmembrane proteins (PstC and PstA) and a solute-binding protein (PstS).

It localises to the cell membrane. It catalyses the reaction phosphate(out) + ATP + H2O = ADP + 2 phosphate(in) + H(+). Functionally, part of the ABC transporter complex PstSACB involved in phosphate import. Responsible for energy coupling to the transport system. The polypeptide is Phosphate import ATP-binding protein PstB 1 (Streptococcus pyogenes serotype M6 (strain ATCC BAA-946 / MGAS10394)).